We begin with the raw amino-acid sequence, 542 residues long: MTKSNGEEPKMGGRMERFQQGVRKRTLLAKKKVQNITKEDVKSYLFRNAFVLLTVTAVIVGTILGFTLRPYRMSYREVKYFSFPGELLMRMLQMLVLPLIISSLVTGMAALDSKASGKMGMRAVVYYMTTTIIAVVIGIIIVIIIHPGKGTKENMHREGKIVRVTAADAFLDLIRNMFPPNLVEACFKQFKTNYEKRSFKVPIQANETLVGAVINNVSEAMETLTRITEELVPVPGSVNGVNALGLVVFSMCFGFVIGNMKEQGQALREFFDSLNEAIMRLVAVIMWYAPVGILFLIAGKIVEMEDMGVIGGQLAMYTVTVIVGLLIHAVIVLPLLYFLVTRKNPWVFIGGLLQALITALGTSSSSATLPITFKCLEENNGVDKRVTRFVLPVGATINMDGTALYEALAAIFIAQVNNFELNFGQIITISITATAASIGAAGIPQAGLVTMVIVLTSVGLPTDDITLIIAVDWFLDRLRTTTNVLGDSLGAGIVEHLSRHELKNRDVEMGNSVIEENEMKKPYQLIAQDNETEKPIDSETKM.

Residues 1-47 (MTKSNGEEPKMGGRMERFQQGVRKRTLLAKKKVQNITKEDVKSYLFR) lie on the Cytoplasmic side of the membrane. A helical membrane pass occupies residues 48–68 (NAFVLLTVTAVIVGTILGFTL). At 69 to 86 (RPYRMSYREVKYFSFPGE) the chain is on the extracellular side. A helical transmembrane segment spans residues 87-108 (LLMRMLQMLVLPLIISSLVTGM). Topologically, residues 109–122 (AALDSKASGKMGMR) are cytoplasmic. A helical transmembrane segment spans residues 123–145 (AVVYYMTTTIIAVVIGIIIVIII). The Extracellular segment spans residues 146–236 (HPGKGTKENM…ITEELVPVPG (91 aa)). The helical transmembrane segment at 237–260 (SVNGVNALGLVVFSMCFGFVIGNM) threads the bilayer. Topologically, residues 261 to 269 (KEQGQALRE) are cytoplasmic. A helical membrane pass occupies residues 270-297 (FFDSLNEAIMRLVAVIMWYAPVGILFLI). Topologically, residues 298–318 (AGKIVEMEDMGVIGGQLAMYT) are extracellular. Residues 319 to 340 (VTVIVGLLIHAVIVLPLLYFLV) traverse the membrane as a helical segment. Residues 341 to 345 (TRKNP) are Cytoplasmic-facing. The discontinuously helical intramembrane region spans 346 to 376 (WVFIGGLLQALITALGTSSSSATLPITFKCL). 363–365 (SSS) provides a ligand contact to L-aspartate. Topologically, residues 377 to 385 (EENNGVDKR) are cytoplasmic. Residues 386–412 (VTRFVLPVGATINMDGTALYEALAAIF) traverse the membrane as a helical segment. The Na(+) site is built by glycine 394, threonine 396, and asparagine 398. Residue threonine 402 participates in L-aspartate binding. At 413 to 425 (IAQVNNFELNFGQ) the chain is on the extracellular side. Residues 426–459 (IITISITATAASIGAAGIPQAGLVTMVIVLTSVG) constitute an intramembrane region (discontinuously helical). 443–447 (IPQAG) contributes to the L-aspartate binding site. Topologically, residues 460-472 (LPTDDITLIIAVD) are extracellular. A helical transmembrane segment spans residues 473–494 (WFLDRLRTTTNVLGDSLGAGIV). L-aspartate-binding residues include aspartate 476 and asparagine 483. Residues asparagine 483 and aspartate 487 each coordinate Na(+). Residues 495–542 (EHLSRHELKNRDVEMGNSVIEENEMKKPYQLIAQDNETEKPIDSETKM) lie on the Cytoplasmic side of the membrane. Residue serine 512 is modified to Phosphoserine.

The protein belongs to the dicarboxylate/amino acid:cation symporter (DAACS) (TC 2.A.23) family. SLC1A3 subfamily. As to quaternary structure, homotrimer. Post-translationally, glycosylated. Detected in brain. Detected at very much lower levels in heart, lung, placenta and skeletal muscle. Highly expressed in cerebellum, but also found in frontal cortex, hippocampus and basal ganglia.

The protein localises to the cell membrane. It carries out the reaction K(+)(in) + L-glutamate(out) + 3 Na(+)(out) + H(+)(out) = K(+)(out) + L-glutamate(in) + 3 Na(+)(in) + H(+)(in). It catalyses the reaction K(+)(in) + L-aspartate(out) + 3 Na(+)(out) + H(+)(out) = K(+)(out) + L-aspartate(in) + 3 Na(+)(in) + H(+)(in). The catalysed reaction is D-aspartate(out) + K(+)(in) + 3 Na(+)(out) + H(+)(out) = D-aspartate(in) + K(+)(out) + 3 Na(+)(in) + H(+)(in). In terms of biological role, sodium-dependent, high-affinity amino acid transporter that mediates the uptake of L-glutamate and also L-aspartate and D-aspartate. Functions as a symporter that transports one amino acid molecule together with two or three Na(+) ions and one proton, in parallel with the counter-transport of one K(+) ion. Mediates Cl(-) flux that is not coupled to amino acid transport; this avoids the accumulation of negative charges due to aspartate and Na(+) symport. Plays a redundant role in the rapid removal of released glutamate from the synaptic cleft, which is essential for terminating the postsynaptic action of glutamate. This chain is Excitatory amino acid transporter 1, found in Homo sapiens (Human).